Here is a 1221-residue protein sequence, read N- to C-terminus: Fibulin-2 (1221 aa).

Positions 1–26 (MLLQESAGVWLALALVTALTPSPSMA) are cleaved as a signal peptide. The tract at residues 27-176 (VPWQDCTGAE…ELICYQLPGC (150 aa)) is subdomain NA (Cys-rich). The interval 27–434 (VPWQDCTGAE…DGSTKDLIET (408 aa)) is n. The segment at 177–434 (HGNFSDAEEG…DGSTKDLIET (258 aa)) is subdomain NB (Cys-free). Asn-179 carries N-linked (GlcNAc...) asparagine glycosylation. 2 disordered regions span residues 248–329 (PTAA…LIPD) and 341–399 (GAAP…PQHP). Residues 270–283 (DTEEDEEEEEEETL) are compositionally biased toward acidic residues. A compositionally biased stretch (basic and acidic residues) spans 312 to 322 (QEKEAEAKAGP). Positions 421–423 (RGD) match the Cell attachment site motif. Disulfide bonds link Cys-435-Cys-462, Cys-436-Cys-469, Cys-449-Cys-470, Cys-479-Cys-508, Cys-492-Cys-509, Cys-511-Cys-535, Cys-512-Cys-542, Cys-525-Cys-543, Cys-598-Cys-610, Cys-606-Cys-619, and Cys-621-Cys-634. 3 consecutive Anaphylatoxin-like domains span residues 435-477 (CCAA…LKEK), 478-510 (SCVAGVMGAKEGETCGAEDNDTCGVSLYKQCCD), and 511-543 (CCGLGLRVRAEGQSCESNPNLGYPCNHVMLSCC). Residue Asn-497 is glycosylated (N-linked (GlcNAc...) asparagine). Positions 594–635 (DQDECLMLPGELCQHLCINTVGSYRCACFPGFELQGDGRTCR) constitute an EGF-like 1; calcium-binding domain. The disordered stretch occupies residues 633–661 (TCRPDRGAPQLDTARESAPRSESAQVSPN). Polar residues predominate over residues 652–661 (RSESAQVSPN). The 40-residue stretch at 669 to 708 (QPNTCKDNGPCRQVCRVVGDTAMCSCFPGYAIMADGVSCE) folds into the EGF-like 2 domain. Disulfide bonds link Cys-673/Cys-683, Cys-679/Cys-692, Cys-694/Cys-707, Cys-713/Cys-726, and Cys-720/Cys-735. Residues 709-755 (DQDECLMGTHDCSWKQFCVNTLGSFYCVNHTVLCAEGYILNAHRKCV) enclose the EGF-like 3; calcium-binding domain. An N-linked (GlcNAc...) asparagine glycan is attached at Asn-737. A disulfide bridge connects residues Cys-742 and Cys-754. In terms of domain architecture, EGF-like 4; calcium-binding spans 756–800 (DINECVTDLHTCTRAEHCVNTPGSFQCYKALTCEPGYVLTDGECT). The region spanning 801–846 (DVDECVTGTHNCQAGFSCQNTKGSFYCQARQRCMDGFLQDPEGNCV) is the EGF-like 5; calcium-binding domain. 3 disulfide bridges follow: Cys-805-Cys-818, Cys-812-Cys-827, and Cys-833-Cys-845. The region spanning 847–894 (DINECTSLLEPCRSGFSCINTVGSYTCQRNPLVCGRGYHANEEGSECV) is the EGF-like 6; calcium-binding domain. In terms of domain architecture, EGF-like 7; calcium-binding spans 895–937 (DVNECETGVHRCGEGQLCYNLPGSYRCDCKPGFQRDAFGRTCI). Intrachain disulfides connect Cys-899–Cys-912, Cys-906–Cys-921, Cys-923–Cys-936, Cys-942–Cys-954, Cys-950–Cys-963, Cys-965–Cys-978, Cys-984–Cys-993, Cys-989–Cys-1002, Cys-1004–Cys-1017, Cys-1023–Cys-1035, Cys-1031–Cys-1044, Cys-1046–Cys-1060, Cys-1066–Cys-1079, Cys-1073–Cys-1088, and Cys-1093–Cys-1105. An EGF-like 8; calcium-binding domain is found at 938-979 (DVNECWVSPGRLCQHTCENTPGSYRCSCAAGFLLAADGKHCE). The EGF-like 9; calcium-binding domain maps to 980–1018 (DVNECETRRCSQECANIYGSYQCYCRQGYQLAEDGHTCT). Residues 1019–1061 (DIDECAQGAGILCTFRCVNVPGSYQCACPEQGYTMMANGRSCK) enclose the EGF-like 10; calcium-binding domain. The EGF-like 11; calcium-binding domain occupies 1062–1106 (DLDECALGTHNCSEAETCHNIQGSFRCLRFDCPPNYVRVSETKCE). Asn-1072 carries an N-linked (GlcNAc...) asparagine glycan. Residues 1111-1221 (QDITECQTSP…MYIFFTTFAP (111 aa)) are domain III.

It belongs to the fibulin family. As to quaternary structure, homotrimer; disulfide-linked. Interacts with LAMA2. Interacts with FBN1 (via N-terminal domain). Forms a ternary complex with ELN and FBN1. As to expression, component of both basement membranes and other connective tissues.

The protein resides in the secreted. The protein localises to the extracellular space. It is found in the extracellular matrix. Functionally, its binding to fibronectin and some other ligands is calcium dependent. May act as an adapter that mediates the interaction between FBN1 and ELN. This is Fibulin-2 (Fbln2) from Mus musculus (Mouse).